We begin with the raw amino-acid sequence, 785 residues long: Peptide transporter family 2 (785 aa).

The next 9 membrane-spanning stretches (helical) occupy residues 46–66 (FSFY…LNFS), 72–92 (VLFH…SILA), 99–119 (FWTI…LAFS), 134–154 (LLGL…VSAF), 167–187 (ISLF…ISMW), 208–228 (FGIP…GSFW), 303–323 (VIVM…QGST), 345–365 (MGVL…SIVY), and 382–402 (AGGG…QLFV). N-linked (GlcNAc...) asparagine glycosylation is present at asparagine 467. Helical transmembrane passes span 670–690 (ILWQ…FSIT), 711–731 (WLFT…LNIF), and 738–758 (MFVF…LAVF).

It belongs to the major facilitator superfamily. Proton-dependent oligopeptide transporter (POT/PTR) (TC 2.A.17) family. Expressed in vulval, pharyngeal and anal muscles.

The protein localises to the membrane. Proton-dependent uptake of di- or tripeptides, and to a minor extent tetrapeptides. Transport is independent of sodium and chloride ions. Protein shows high affinity to peptide substrates. This Caenorhabditis elegans protein is Peptide transporter family 2 (pept-2).